The chain runs to 73 residues: Translation initiation factor IF-1 (73 aa).

One can recognise an S1-like domain in the interval 1 to 73; the sequence is MAKKEGALEL…TRGRIVYRHK (73 aa).

It belongs to the IF-1 family. Component of the 30S ribosomal translation pre-initiation complex which assembles on the 30S ribosome in the order IF-2 and IF-3, IF-1 and N-formylmethionyl-tRNA(fMet); mRNA recruitment can occur at any time during PIC assembly.

The protein resides in the cytoplasm. In terms of biological role, one of the essential components for the initiation of protein synthesis. Stabilizes the binding of IF-2 and IF-3 on the 30S subunit to which N-formylmethionyl-tRNA(fMet) subsequently binds. Helps modulate mRNA selection, yielding the 30S pre-initiation complex (PIC). Upon addition of the 50S ribosomal subunit IF-1, IF-2 and IF-3 are released leaving the mature 70S translation initiation complex. This Cutibacterium acnes (strain DSM 16379 / KPA171202) (Propionibacterium acnes) protein is Translation initiation factor IF-1.